We begin with the raw amino-acid sequence, 399 residues long: Bone morphogenetic protein 8B (399 aa).

The first 19 residues, 1 to 19 (MAARPGLLWLLGLALCVLG), serve as a signal peptide directing secretion. Positions 20–260 (GGHLSHPPHV…ANQSPVRAPR (241 aa)) are excised as a propeptide. 2 N-linked (GlcNAc...) asparagine glycosylation sites follow: asparagine 155 and asparagine 340. Cystine bridges form between cysteine 298–cysteine 364, cysteine 327–cysteine 396, and cysteine 331–cysteine 398.

The protein belongs to the TGF-beta family. In terms of assembly, homodimer; disulfide-linked. As to expression, expressed in testis. Expressed in decidual cells of the uterus and in trophoblast cells of the labyrinthine region of the placenta and in the inner root sheath of hair follicles of early postnatal skin. Expressed in the extraembryonic ectoderm in pregastrula and gastrula stage mouse embryos. Expressed in brown adipose tissue and brain.

Its subcellular location is the secreted. Functionally, induces cartilage and bone formation. May be the osteoinductive factor responsible for the phenomenon of epithelial osteogenesis. Plays a role in calcium regulation and bone homeostasis. Involved in the generation of primordial germ cells; this function involves Bmp4 in a synergistic manner though separate receptor complexes seem to be involved. Required for the initiation and maintenance of spermatogenesis. Signaling protein involved in regulation of thermogenesis and energy balance. Proposed to increase the peripheral response of brown adipose tissue (BAT) to adrenergic stimulation while acting centrally in the hypothalamus to increase sympathetic output to BAT. The sequence is that of Bone morphogenetic protein 8B (Bmp8b) from Mus musculus (Mouse).